The primary structure comprises 392 residues: Small ribosomal subunit protein uS9m (392 aa).

The segment covering 8–25 (RSSRAMSSASPASASDSD) has biased composition (low complexity). A disordered region spans residues 8-27 (RSSRAMSSASPASASDSDTS).

The protein belongs to the universal ribosomal protein uS9 family. In terms of assembly, component of the mitochondrial ribosome small subunit (28S) which comprises a 12S rRNA and about 30 distinct proteins.

The protein resides in the mitochondrion. The protein is Small ribosomal subunit protein uS9m (mrps-9) of Caenorhabditis elegans.